Reading from the N-terminus, the 539-residue chain is Fucosyltransferase 2 (539 aa).

The Cytoplasmic segment spans residues 1–5; that stretch reads MRITE. Residues 6–26 form a helical; Signal-anchor for type II membrane protein membrane-spanning segment; the sequence is ILALFMVLVPVSLVIVAMFGY. Residues 27–539 are Lumenal-facing; it reads DQGNGFVQAS…SWGLKLVDNF (513 aa). N-linked (GlcNAc...) asparagine glycans are attached at residues Asn-44, Asn-231, and Asn-482.

The protein belongs to the glycosyltransferase 37 family. As to expression, expressed in roots, stems, leaves, flowers, siliques and seedlings.

The protein resides in the golgi apparatus. It localises to the golgi stack membrane. It participates in protein modification; protein glycosylation. Its function is as follows. May be involved in cell wall biosynthesis. May act as a fucosyltransferase. The chain is Fucosyltransferase 2 (FUT2) from Arabidopsis thaliana (Mouse-ear cress).